Consider the following 2541-residue polypeptide: Talin-1 (2541 aa).

One can recognise an FERM domain in the interval 86 to 403; that stretch reads RPLKIRMLDG…GYIDIILKKK (318 aa). The residue at position 167 (Thr167) is a Phosphothreonine. The interaction with LAYN stretch occupies residues 280–435; it reads FQAHKNCGQM…PKKSTVLQQQ (156 aa). A phosphoserine mark is found at Ser405, Ser425, Ser446, Ser620, and Ser729. Residues 482 to 655 are helical bundle R1; it reads RGHMPPLTSA…QASGELLQQI (174 aa). The segment at 656 to 786 is helical bundle R2; it reads GESDTDPHFQ…ALNELLQHVK (131 aa). A helical bundle R3 region spans residues 787–911; the sequence is AHATGAGPAG…NAAAQNAIKK (125 aa). The segment at 913–1044 is helical bundle R4; the sequence is LVQRLEHAAK…RTAAQKAQEA (132 aa). Ser1021 bears the Phosphoserine mark. The tract at residues 1046-1206 is helical bundle R5; sequence GPLEMDSALS…NRCVSCLPGQ (161 aa). Residue Tyr1116 is modified to Phosphotyrosine. Thr1142 carries the post-translational modification Phosphothreonine. Phosphoserine is present on residues Ser1201 and Ser1225. Residues 1207–1357 form a helical bundle R6 region; the sequence is RDVDNALRAV…QLITMCTQQA (151 aa). Phosphothreonine is present on Thr1263. 2 positions are modified to phosphoserine: Ser1323 and Ser1328. Positions 1327–1948 are interaction with SYNM; the sequence is ASPNLKSQLA…CSPSDVYTKK (622 aa). The segment at 1358 to 1453 is helical bundle R7A; Interaction with KANK1; that stretch reads PGQKECDNAL…AYLVGVSDPN (96 aa). The tract at residues 1359–1659 is interaction with VCL and F-actin; the sequence is GQKECDNALR…SMRDKAPGQL (301 aa). Residues 1461–1580 form a helical bundle R8 region; it reads LVEPTQFARA…NLSAFASNPE (120 aa). Lys1544 carries the post-translational modification N6-acetyllysine. The tract at residues 1581-1653 is helical bundle R7B; Interaction with KANK1; the sequence is FSSVPAQISP…IKKLITSMRD (73 aa). Residues 1655–1822 are helical bundle R9; sequence APGQLECETA…TLNEAASAAG (168 aa). Residues 1823–1973 are helical bundle R10; it reads VVGGMVDSIT…VLAALQAGNR (151 aa). A Phosphoserine modification is found at Ser1849. At Thr1855 the chain carries Phosphothreonine. Ser1878 is modified (phosphoserine). The tract at residues 1974-2140 is helical bundle R11; that stretch reads GTQACITAAS…TVKAVEDEAT (167 aa). Lys2031 is modified (N6-acetyllysine). Ser2040 is modified (phosphoserine). An N6-acetyllysine modification is found at Lys2115. The tract at residues 2141–2294 is helical bundle R12; it reads KGTRALEATT…QAAEAMKGTE (154 aa). Positions 2293-2533 constitute an I/LWEQ domain; that stretch reads TEWVDPEDPT…QIRQQQYKFL (241 aa). The segment at 2300–2482 is helical bundle R13; the sequence is DPTVIAENEL…AAQKAAAFED (183 aa).

In terms of assembly, part of a complex composed of THSD1, PTK2/FAK1, TLN1 and VCL. Interacts with THSD1; this promotes interaction with PTK2/FAK1 and VCL. Interacts with NRAP and LAYN. Interacts with SYNM. Interacts with ITGB1; the interaction is prevented by competitive binding of ITGB1BP1. Binds with high affinity to VCL and with low affinity to integrins. Interacts with APBB1IP; this inhibits VCL binding. Interacts with PTK2/FAK1. Interacts with PIP5K1C. Interacts with F-actin. Interacts with SVEP1. Interacts (via R7 domain) with KANK1 or KANK2 (via KN motif); this interaction likely initiates the assembly of cortical microtubule stabilization complexes (CMSCs) at the vicinity of focal adhesions.

The protein resides in the cell projection. It localises to the ruffle membrane. Its subcellular location is the cytoplasm. It is found in the cytoskeleton. The protein localises to the cell surface. The protein resides in the cell junction. It localises to the focal adhesion. In terms of biological role, high molecular weight cytoskeletal protein concentrated at regions of cell-matrix and cell-cell contacts. Involved in connections of major cytoskeletal structures to the plasma membrane. With KANK1 co-organize the assembly of cortical microtubule stabilizing complexes (CMSCs) positioned to control microtubule-actin crosstalk at focal adhesions (FAs) rims. This chain is Talin-1 (Tln1), found in Mus musculus (Mouse).